The following is a 552-amino-acid chain: Membrane protein insertase YidC (552 aa).

A helical membrane pass occupies residues 3–23 (IKRTVLWVIFFMSAVMLFDNW). Positions 36–59 (SATPTRTVGSAAPGTTTPGTQPAD) are disordered. Residues 42-59 (TVGSAAPGTTTPGTQPAD) show a composition bias toward low complexity. 3 helical membrane-spanning segments follow: residues 364–384 (WGWSIVLLTLLIKAVFFPLSA), 430–450 (FGGCLPVVIQIPVFISLYWVL), and 504–524 (MMFMPIAFSVMFFFFPAGLVL).

This sequence belongs to the OXA1/ALB3/YidC family. Type 1 subfamily. In terms of assembly, interacts with the Sec translocase complex via SecD. Specifically interacts with transmembrane segments of nascent integral membrane proteins during membrane integration.

It localises to the cell inner membrane. Its function is as follows. Required for the insertion and/or proper folding and/or complex formation of integral membrane proteins into the membrane. Involved in integration of membrane proteins that insert both dependently and independently of the Sec translocase complex, as well as at least some lipoproteins. Aids folding of multispanning membrane proteins. This Paraburkholderia xenovorans (strain LB400) protein is Membrane protein insertase YidC.